Consider the following 247-residue polypeptide: Carboxy-S-adenosyl-L-methionine synthase (247 aa).

S-adenosyl-L-methionine is bound by residues Y40, 65–67, 90–91, 122–123, N137, and R204; these read GAS, DN, and DI.

It belongs to the class I-like SAM-binding methyltransferase superfamily. Cx-SAM synthase family. As to quaternary structure, homodimer.

The enzyme catalyses prephenate + S-adenosyl-L-methionine = carboxy-S-adenosyl-L-methionine + 3-phenylpyruvate + H2O. In terms of biological role, catalyzes the conversion of S-adenosyl-L-methionine (SAM) to carboxy-S-adenosyl-L-methionine (Cx-SAM). The protein is Carboxy-S-adenosyl-L-methionine synthase of Pseudomonas putida (strain ATCC 700007 / DSM 6899 / JCM 31910 / BCRC 17059 / LMG 24140 / F1).